A 115-amino-acid polypeptide reads, in one-letter code: Meiotically up-regulated gene 42 protein (115 aa).

Functionally, has a role in meiosis. The chain is Meiotically up-regulated gene 42 protein (mug42) from Schizosaccharomyces pombe (strain 972 / ATCC 24843) (Fission yeast).